The following is a 302-amino-acid chain: tRNA dimethylallyltransferase (302 aa).

Residue 2–9 (GPTACGKS) participates in ATP binding. Position 4–9 (4–9 (TACGKS)) interacts with substrate. Interaction with substrate tRNA regions lie at residues 27-30 (DSAL) and 149-153 (QRLIR).

The protein belongs to the IPP transferase family. As to quaternary structure, monomer. The cofactor is Mg(2+).

The catalysed reaction is adenosine(37) in tRNA + dimethylallyl diphosphate = N(6)-dimethylallyladenosine(37) in tRNA + diphosphate. In terms of biological role, catalyzes the transfer of a dimethylallyl group onto the adenine at position 37 in tRNAs that read codons beginning with uridine, leading to the formation of N6-(dimethylallyl)adenosine (i(6)A). The sequence is that of tRNA dimethylallyltransferase from Buchnera aphidicola subsp. Acyrthosiphon pisum (strain 5A).